The following is a 570-amino-acid chain: Putative periplasmic trehalase (570 aa).

Residues 1 to 34 (MIPPEIRRSVLLQKAIKLALAGTLLTFASFSATA) form the signal peptide. Residues arginine 159, 166 to 167 (WD), asparagine 203, 212 to 214 (RSQ), 284 to 286 (RPE), and glycine 317 each bind substrate. Residues aspartate 319 and glutamate 503 each act as proton donor/acceptor in the active site. Glutamate 518 is a substrate binding site. The segment at 544–570 (KPCDSVPSTRPASLSATPTKTPSAATQ) is disordered. The segment covering 554–570 (PASLSATPTKTPSAATQ) has biased composition (low complexity).

The protein belongs to the glycosyl hydrolase 37 family. In terms of assembly, monomer.

Its subcellular location is the periplasm. It catalyses the reaction alpha,alpha-trehalose + H2O = alpha-D-glucose + beta-D-glucose. Its function is as follows. Provides the cells with the ability to utilize trehalose at high osmolarity by splitting it into glucose molecules that can subsequently be taken up by the phosphotransferase-mediated uptake system. The polypeptide is Putative periplasmic trehalase (Salmonella typhi).